A 481-amino-acid polypeptide reads, in one-letter code: Threonine synthase (481 aa).

Position 118 is an N6-(pyridoxal phosphate)lysine (Lys-118).

The protein belongs to the threonine synthase family. In terms of assembly, monomer. Pyridoxal 5'-phosphate is required as a cofactor.

The enzyme catalyses O-phospho-L-homoserine + H2O = L-threonine + phosphate. It functions in the pathway amino-acid biosynthesis; L-threonine biosynthesis; L-threonine from L-aspartate: step 5/5. In terms of biological role, catalyzes the gamma-elimination of phosphate from L-phosphohomoserine and the beta-addition of water to produce L-threonine. The chain is Threonine synthase (thrC) from Corynebacterium glutamicum (strain ATCC 13032 / DSM 20300 / JCM 1318 / BCRC 11384 / CCUG 27702 / LMG 3730 / NBRC 12168 / NCIMB 10025 / NRRL B-2784 / 534).